Here is a 218-residue protein sequence, read N- to C-terminus: DNA replication complex GINS protein psf3 (218 aa).

Residues 147–163 (GGGSSYHGRDGGGAGGK) are compositionally biased toward gly residues. The segment at 147 to 182 (GGGSSYHGRDGGGAGGKGKGKATKDDNASNLGVGGA) is disordered.

It belongs to the GINS3/PSF3 family. In terms of assembly, component of the GINS complex which is a heterotetramer of div-26/sld5, drc-1/psf1, drc-2/psf2 and drc-3/psf3.

It localises to the nucleus. Functionally, the GINS complex plays an essential role in the initiation of DNA replication. This chain is DNA replication complex GINS protein psf3 (drc-3), found in Neurospora crassa (strain ATCC 24698 / 74-OR23-1A / CBS 708.71 / DSM 1257 / FGSC 987).